We begin with the raw amino-acid sequence, 362 residues long: Homoisocitrate dehydrogenase (362 aa).

79-81 (VQS) lines the NADH pocket. Residue serine 81 participates in (2R,3S)-homoisocitrate binding. Phosphoserine occurs at positions 81 and 91. (2R,3S)-homoisocitrate is bound by residues arginine 97, arginine 107, arginine 126, tyrosine 133, lysine 196, and asparagine 198. Asparagine 198 is a binding site for NADH. Positions 232, 256, and 260 each coordinate Mg(2+). Residues 289 to 293 (GSAPD) and asparagine 301 contribute to the NADH site.

Belongs to the isocitrate and isopropylmalate dehydrogenases family. Requires Mg(2+) as cofactor.

It localises to the cytoplasm. It catalyses the reaction (2R,3S)-homoisocitrate + NAD(+) = 2-oxoadipate + CO2 + NADH. It functions in the pathway amino-acid biosynthesis; L-lysine biosynthesis via AAA pathway; L-alpha-aminoadipate from 2-oxoglutarate: step 4/5. The sequence is that of Homoisocitrate dehydrogenase (lys12) from Schizosaccharomyces pombe (strain 972 / ATCC 24843) (Fission yeast).